Consider the following 845-residue polypeptide: MGCVKLVFFMLLKLDLLEFKNMFTVNPNASDYCYDYTDQRMQSYPRTLFWNKSTDCCSWDGIHCDETTGQVVELDLRCSQLQGKFHSNSSLFQLSNLKRLDLSFNDFTGSLISPKFGEFSDLTHLDLSDSNFTGVIPSEISHLSKLHVLRIHDLNELSLGPHNFELLLKNLTQLRELNLDSVNISSTIPSNFSSHLTNLWLPYTELRGVLPERVFHLSDLEFLHLSYNPQLTVRFPTTKWNSSASLMKLYVHSVNIADRIPESFSHLTSLHALYMGRCNLSGHIPKPLWNLTNIESLFLGDNHLEGPIPQLTRFEKLKRLSLGNNNLHGGLEFLSFNRSWTQLEILYFSSNYLTGPIPSNVSGLQNLGWLFLSSNHLNGSIPSWIFSLPSLVVLDLSNNTFSGKIQEFKSKTLSTVTLKQNQLEGPIPNSLLNQESLQFLLLSHNNISGYISSSICNLKTLMVLDLGSNNLEGTIPQCVGERNEYLLDLDLSNNRLSGTINTTFSIGNSFKAISLHGNKLTGKVPRSLINCKYLKLLDLGNNQLNDTFPNWLGYLSQLKILSLRSNKLHGPIKSSGSTNLFMRLQILDLSSNGFSGNLPERILGNLQTMKKIDENTRFPEYISDQYEIYYVYLTTITTKGQDYDSVRILDSNMIINLSKNRFEGHIPSIIGDLVGLRTLNLSRNALEGHIPASFQNLSVLESLDLSSNRISGEIPQQLASLTFLEVLNLSHNHLVGCIPKGKQFDSFGNTSYQGNDGLRGFPLSKLCGVDDQVTTPAELDQEEEEEDSPMISWQGVLVGYGCGLVIGLSVIYIMWSTQYPAWFSRMDLKLEHIITTRMKKHKKRY.

The N-terminal stretch at 1-19 (MGCVKLVFFMLLKLDLLEF) is a signal peptide. Positions 20–70 (KNMFTVNPNASDYCYDYTDQRMQSYPRTLFWNKSTDCCSWDGIHCDETTGQ) are N-cap. Residues 20–794 (KNMFTVNPNA…EEDSPMISWQ (775 aa)) lie on the Extracellular side of the membrane. Asn-28, Asn-51, and Asn-88 each carry an N-linked (GlcNAc...) asparagine glycan. An LRR 1; degenerate repeat occupies 71 to 94 (VVELDLRCSQLQGKFHSNSSLFQL). 25 LRR repeats span residues 95-118 (SNLK…KFGE), 119-143 (FSDL…ISHL), 144-171 (SKLH…LKNL), 172-193 (TQLR…SNFS), 194-217 (SHLT…VFHL), 219-242 (DLEF…KWNS), 244-266 (ASLM…SFSH), 267-291 (LTSL…LWNL), 292-316 (TNIE…RFEK), 318-338 (KRLS…SFNR), 340-364 (WTQL…VSGL), 365-388 (QNLG…IFSL), 390-410 (SLVV…EFKS), 411-434 (KTLS…LLNQ), 436-458 (SLQF…ICNL), 459-482 (KTLM…VGER), 484-506 (EYLL…TFSI), 507-531 (GNSF…LINC), 532-554 (KYLK…WLGY), 555-579 (LSQL…GSTN), 581-605 (FMRL…ILGN), 649-672 (LDSN…IIGD), 673-696 (LVGL…SFQN), 698-721 (SVLE…LASL), and 723-741 (FLEV…IPKG). Residues Asn-131, Asn-170, Asn-183, and Asn-191 are each glycosylated (N-linked (GlcNAc...) asparagine). Asn-241 carries an N-linked (GlcNAc...) asparagine glycan. N-linked (GlcNAc...) asparagine glycans are attached at residues Asn-279 and Asn-290. N-linked (GlcNAc...) asparagine glycosylation is found at Asn-337, Asn-360, Asn-378, and Asn-398. The N-linked (GlcNAc...) asparagine glycan is linked to Asn-446. Asn-501 carries an N-linked (GlcNAc...) asparagine glycan. A glycan (N-linked (GlcNAc...) asparagine) is linked at Asn-545. N-linked (GlcNAc...) asparagine glycosylation is found at Asn-656, Asn-680, and Asn-696. Asn-728 and Asn-749 each carry an N-linked (GlcNAc...) asparagine glycan. The C-cap/acidic domain stretch occupies residues 742–794 (KQFDSFGNTSYQGNDGLRGFPLSKLCGVDDQVTTPAELDQEEEEEDSPMISWQ). Residues 795-815 (GVLVGYGCGLVIGLSVIYIMW) form a helical membrane-spanning segment. Over 816-845 (STQYPAWFSRMDLKLEHIITTRMKKHKKRY) the chain is Cytoplasmic.

It belongs to the RLP family.

The protein localises to the cell membrane. In terms of biological role, at the opposite of its homolog Cf-9 found in S.pimpinellifolium, was not able to confer resistance to the fungal pathogen C.fulvum. The polypeptide is Receptor-like protein Cf-9 homolog (Solanum lycopersicum (Tomato)).